The chain runs to 555 residues: Connector enhancer of kinase suppressor of ras 3 (555 aa).

Residues 7–72 enclose the SAM domain; the sequence is WSPKQVVDWT…LEAVDLLCAL (66 aa). A CRIC domain is found at 80–174; it reads NMKNLVLKLR…TAVQKDCLVA (95 aa). The PDZ domain occupies 211 to 293; it reads EVHLPNVRPG…GVVLLLKKRP (83 aa). 3 disordered regions span residues 308 to 333, 348 to 391, and 518 to 538; these read RWKP…MDAS, PPPA…LDQE, and PFQE…ASSG. Low complexity predominate over residues 311–329; it reads PPLVQTSPPPTTTQSPEST. The region spanning 325 to 546 is the DUF1170 domain; it reads SPESTMDASL…SGEPSLLVSW (222 aa). Phosphoserine occurs at positions 381 and 383.

It belongs to the CNKSR family. In terms of assembly, interacts with epithelial sodium channel ENaC. Interacts directly with SCNN1A (ENaC subunit alpha) and SCNN1B (ENaC subunit beta) C-terminal tails. Interacts with ENaC regulatory proteins NEDD4L, RAF1 and SGK1.

It localises to the cytoplasm. The protein localises to the apical cell membrane. Functionally, involved in transepithelial sodium transport. Regulates aldosterone-induced and epithelial sodium channel (ENaC)-mediated sodium transport through regulation of ENaC cell surface expression. Acts as a scaffold protein coordinating the assembly of an ENaC-regulatory complex (ERC). This is Connector enhancer of kinase suppressor of ras 3 (Cnksr3) from Rattus norvegicus (Rat).